Consider the following 655-residue polypeptide: FYVE, RhoGEF and PH domain-containing protein 2 (655 aa).

Phosphoserine is present on residues S10, S39, and S47. Disordered stretches follow at residues 21–52 (NRTPGEAPGSHSLEDQPHSPEHQLSLSPEPWE) and 84–103 (WRRSCQPGVSPGPETQEPEE). Residues 32-41 (SLEDQPHSPE) are compositionally biased toward basic and acidic residues. Residues 102–290 (EEKRVVRELL…FSAAQHSNAA (189 aa)) form the DH domain. The region spanning 319–418 (TLLREGPVLK…WMQACQAAID (100 aa)) is the PH 1 domain. The segment at 458 to 518 (DKMVTMCMRC…VCLTCYTFLT (61 aa)) adopts an FYVE-type zinc-finger fold. Residues C464, C467, C481, C484, C489, C492, C510, and C513 each coordinate Zn(2+). Residues 544 to 641 (QSLVCSFLQL…WVTAIKRAAS (98 aa)) form the PH 2 domain. T644 carries the post-translational modification Phosphothreonine. S654 is subject to Phosphoserine.

In terms of tissue distribution, lymph node, spleen, B-lymphocytes and macrophages (at protein level). Expressed at high levels in lymph node, spleen, B-lymphocytes and bone marrow macrophages. Expressed at lower levels in mature bone marrow dendritic cells. In both immature and mature B-cells, expression is down-regulated by prior B-cell receptor signaling. Expression remains high in resting B and memory cells but declines upon differentiation into plasma cells.

It is found in the cytoplasm. The protein localises to the nucleus. Its subcellular location is the early endosome. The protein resides in the early endosome membrane. It localises to the cell projection. It is found in the ruffle membrane. The protein localises to the cytoskeleton. Functionally, activates CDC42, a member of the Ras-like family of Rho- and Rac proteins, by exchanging bound GDP for free GTP. Activates JNK1 via CDC42 but not RAC1. Binds to phosphatidylinositol 4,5-bisphosphate, phosphatidylinositol 3,4,5-trisphosphate, phosphatidylinositol 5-monophosphate, phosphatidylinositol 4-monophosphate and phosphatidylinositol 3-monophosphate. The polypeptide is FYVE, RhoGEF and PH domain-containing protein 2 (Fgd2) (Mus musculus (Mouse)).